Consider the following 270-residue polypeptide: Putative pyruvate, phosphate dikinase regulatory protein (270 aa).

Gly148–Thr155 contributes to the ADP binding site.

The protein belongs to the pyruvate, phosphate/water dikinase regulatory protein family. PDRP subfamily.

The enzyme catalyses N(tele)-phospho-L-histidyl/L-threonyl-[pyruvate, phosphate dikinase] + ADP = N(tele)-phospho-L-histidyl/O-phospho-L-threonyl-[pyruvate, phosphate dikinase] + AMP + H(+). It carries out the reaction N(tele)-phospho-L-histidyl/O-phospho-L-threonyl-[pyruvate, phosphate dikinase] + phosphate + H(+) = N(tele)-phospho-L-histidyl/L-threonyl-[pyruvate, phosphate dikinase] + diphosphate. Bifunctional serine/threonine kinase and phosphorylase involved in the regulation of the pyruvate, phosphate dikinase (PPDK) by catalyzing its phosphorylation/dephosphorylation. The protein is Putative pyruvate, phosphate dikinase regulatory protein of Bacillus cereus (strain AH187).